Consider the following 213-residue polypeptide: MASLFKKKTVDDVIKEQNRELRGTQRAIIRDRAALEKQEKQLELEIKKMAKIGNKEACRVLAKQLVHLRKQKTRTFAVSSKVTSMSTQTKVMNSQMKMAGAMSTTAKTMQAVNKKMDPQKTLQTMQNFQKENMKMEMTEEMINDTLDDIFDGSDDEEESQDIVNQVLDEIGIEISGKMAKAPSAARSLPSASTSKSTISDEEIERQLKALGVD.

Alanine 2 carries the post-translational modification N-acetylalanine. Residues 25-55 (QRAIIRDRAALEKQEKQLELEIKKMAKIGNK) adopt a coiled-coil conformation. The disordered stretch occupies residues 178 to 202 (MAKAPSAARSLPSASTSKSTISDEE). Residues 179-194 (AKAPSAARSLPSASTS) show a composition bias toward low complexity. Serine 199 is subject to Phosphoserine. The MIT-interacting motif motif lies at 201–211 (EEIERQLKALG).

The protein belongs to the SNF7 family. As to quaternary structure, probable core component of the endosomal sorting required for transport complex III (ESCRT-III). ESCRT-III components are thought to multimerize to form a flat lattice on the perimeter membrane of the endosome. Several assembly forms of ESCRT-III may exist that interact and act sequentially. Interacts with CHMP2A. Interacts with VPS4A. Interacts with VPS4B; the interaction is direct.

It is found in the cytoplasm. It localises to the cytosol. Its subcellular location is the late endosome membrane. Its function is as follows. Probable core component of the endosomal sorting required for transport complex III (ESCRT-III) which is involved in multivesicular bodies (MVBs) formation and sorting of endosomal cargo proteins into MVBs. MVBs contain intraluminal vesicles (ILVs) that are generated by invagination and scission from the limiting membrane of the endosome and mostly are delivered to lysosomes enabling degradation of membrane proteins, such as stimulated growth factor receptors, lysosomal enzymes and lipids. The MVB pathway appears to require the sequential function of ESCRT-O, -I,-II and -III complexes. ESCRT-III proteins mostly dissociate from the invaginating membrane before the ILV is released. The ESCRT machinery also functions in topologically equivalent membrane fission events, such as the terminal stages of cytokinesis and the budding of enveloped viruses (lentiviruses). ESCRT-III proteins are believed to mediate the necessary vesicle extrusion and/or membrane fission activities, possibly in conjunction with the AAA ATPase VPS4. The chain is Charged multivesicular body protein 2b (CHMP2B) from Bos taurus (Bovine).